The primary structure comprises 227 residues: Cytidylate kinase (227 aa).

Position 10–18 (10–18 (GPASSGKST)) interacts with ATP.

This sequence belongs to the cytidylate kinase family. Type 1 subfamily.

It localises to the cytoplasm. It carries out the reaction CMP + ATP = CDP + ADP. The enzyme catalyses dCMP + ATP = dCDP + ADP. This chain is Cytidylate kinase, found in Streptococcus mutans serotype c (strain ATCC 700610 / UA159).